The following is a 908-amino-acid chain: UPF0182 protein NT01CX_0852 (908 aa).

The next 7 membrane-spanning stretches (helical) occupy residues isoleucine 8–isoleucine 28, phenylalanine 47–threonine 67, isoleucine 96–tyrosine 116, leucine 157–isoleucine 177, leucine 209–tryptophan 229, phenylalanine 253–leucine 273, and isoleucine 280–alanine 300.

The protein belongs to the UPF0182 family.

The protein localises to the cell membrane. This Clostridium novyi (strain NT) protein is UPF0182 protein NT01CX_0852.